Reading from the N-terminus, the 892-residue chain is Alanine--tRNA ligase (892 aa).

Residues H574, H578, C676, and H680 each coordinate Zn(2+).

It belongs to the class-II aminoacyl-tRNA synthetase family. It depends on Zn(2+) as a cofactor.

Its subcellular location is the cytoplasm. It carries out the reaction tRNA(Ala) + L-alanine + ATP = L-alanyl-tRNA(Ala) + AMP + diphosphate. Its function is as follows. Catalyzes the attachment of alanine to tRNA(Ala) in a two-step reaction: alanine is first activated by ATP to form Ala-AMP and then transferred to the acceptor end of tRNA(Ala). Also edits incorrectly charged Ser-tRNA(Ala) and Gly-tRNA(Ala) via its editing domain. This Prochlorococcus marinus (strain MIT 9303) protein is Alanine--tRNA ligase.